The sequence spans 319 residues: Nucleotide-binding protein Mvan_2698 (319 aa).

Positions 1–12 are enriched in basic and acidic residues; that stretch reads MTEQGMHQELRE. A disordered region spans residues 1 to 26; it reads MTEQGMHQELREGAGTAGDEGGLEAA. 43-50 is a binding site for ATP; that stretch reads GLSGAGRG. 94–97 serves as a coordination point for GTP; it reads DVRS.

This sequence belongs to the RapZ-like family.

In terms of biological role, displays ATPase and GTPase activities. The polypeptide is Nucleotide-binding protein Mvan_2698 (Mycolicibacterium vanbaalenii (strain DSM 7251 / JCM 13017 / BCRC 16820 / KCTC 9966 / NRRL B-24157 / PYR-1) (Mycobacterium vanbaalenii)).